The chain runs to 201 residues: Large ribosomal subunit protein uL4 (201 aa).

Positions 44-71 (RAQKTRAEVTGSGKKPWRQKGTGRARSG) are disordered.

This sequence belongs to the universal ribosomal protein uL4 family. In terms of assembly, part of the 50S ribosomal subunit.

Functionally, one of the primary rRNA binding proteins, this protein initially binds near the 5'-end of the 23S rRNA. It is important during the early stages of 50S assembly. It makes multiple contacts with different domains of the 23S rRNA in the assembled 50S subunit and ribosome. In terms of biological role, forms part of the polypeptide exit tunnel. In Shigella flexneri serotype 5b (strain 8401), this protein is Large ribosomal subunit protein uL4.